Reading from the N-terminus, the 376-residue chain is Probable plastid-lipid-associated protein 3, chloroplastic (376 aa).

The N-terminal 53 residues, 1-53 (MATLFTVARPSSLLYVSSINPSKTFSPSISLKLNSLSFSFGYRPKPLRFSKIR), are a transit peptide targeting the chloroplast. The disordered stretch occupies residues 54-146 (SSLPSESESE…EADAGNGSAV (93 aa)). Residues 85–96 (PDSQPDNVTVNV) are compositionally biased toward polar residues. The segment covering 117-126 (MESDPPRNED) has biased composition (basic and acidic residues).

Belongs to the PAP/fibrillin family.

The protein resides in the plastid. It localises to the chloroplast. It is found in the plastoglobule. Functionally, probably involved in light/cold stress-related jasmonate (JA) biosynthesis. This chain is Probable plastid-lipid-associated protein 3, chloroplastic (PAP3), found in Arabidopsis thaliana (Mouse-ear cress).